Reading from the N-terminus, the 585-residue chain is A-type ATP synthase subunit A (585 aa).

Position 237–244 (Gly237–Thr244) interacts with ATP.

It belongs to the ATPase alpha/beta chains family. As to quaternary structure, has multiple subunits with at least A(3), B(3), C, D, E, F, H, I and proteolipid K(x).

The protein resides in the cell membrane. It catalyses the reaction ATP + H2O + 4 H(+)(in) = ADP + phosphate + 5 H(+)(out). Its function is as follows. Component of the A-type ATP synthase that produces ATP from ADP in the presence of a proton gradient across the membrane. The A chain is the catalytic subunit. This chain is A-type ATP synthase subunit A, found in Natronomonas pharaonis (strain ATCC 35678 / DSM 2160 / CIP 103997 / JCM 8858 / NBRC 14720 / NCIMB 2260 / Gabara) (Halobacterium pharaonis).